A 332-amino-acid chain; its full sequence is Fructose-1,6-bisphosphatase class 1 (332 aa).

Glu-94, Asp-116, Leu-118, and Asp-119 together coordinate Mg(2+). Substrate contacts are provided by residues 119 to 122 (DGSS), Asn-211, Tyr-239, 257 to 259 (YLY), and Lys-269. Glu-275 contacts Mg(2+).

Belongs to the FBPase class 1 family. Homotetramer. Mg(2+) is required as a cofactor.

The protein localises to the cytoplasm. The enzyme catalyses beta-D-fructose 1,6-bisphosphate + H2O = beta-D-fructose 6-phosphate + phosphate. Its pathway is carbohydrate biosynthesis; Calvin cycle. The chain is Fructose-1,6-bisphosphatase class 1 from Synechococcus sp. (strain JA-2-3B'a(2-13)) (Cyanobacteria bacterium Yellowstone B-Prime).